A 1329-amino-acid polypeptide reads, in one-letter code: BRCT domain-containing protein At4g02110 (1329 aa).

2 consecutive BRCT domains span residues 7–97 and 104–194; these read LPPK…SILY and NGIP…DYEI. 5 disordered regions span residues 295 to 378, 393 to 470, 576 to 645, 745 to 827, and 952 to 1077; these read ANKT…SMER, GEEF…TSEL, EVPE…SPTD, NDVP…ADGK, and AKKE…KESK. Composition is skewed to polar residues over residues 323–335 and 363–378; these read SLAT…LQRS and SAFN…SMER. Basic and acidic residues-rich tracts occupy residues 410–422 and 600–611; these read VSRK…HHNS and RMKDKQETELTT. The segment covering 793–802 has biased composition (basic residues); that stretch reads GKSRVKKTKI. Composition is skewed to basic and acidic residues over residues 818-827 and 971-983; these read DGGDNSADGK and DDNK…EGIV. Positions 986–1004 are enriched in low complexity; that stretch reads SSLQSGKKGSSSRVEVGKS. Residues 1024-1047 show a composition bias toward basic and acidic residues; sequence VMKDVGDNSAKEKENIAVDNESRK. The region spanning 1090 to 1181 is the BRCT 3 domain; the sequence is FQDQEHEPKF…KLLQEEPYEW (92 aa).

This chain is BRCT domain-containing protein At4g02110, found in Arabidopsis thaliana (Mouse-ear cress).